The sequence spans 335 residues: MQKKVIAAIIGTSAISAVAATQANAATTHTVKPGESVWAISNKYGISIAKLKSLNNLTSNLIFPNQVLKVSGSSNSTSNSSRPSTNSGGGSYYTVQAGDSLSLIASKYGTTYQNIMRLNGLNNFFIYPGQKLKVSGTASSSNAASNSSRPSTNSGGGSYYTVQAGDSLSLIASKYGTTYQKIMSLNGLNNFFIYPGQKLKVTGNATSSNSASATTTNRGYNTPVFSHQNLYTWGQCTYHVFNRRAEIGKGISTYWWNANNWDNAAAADGYTIDNRPTVGSIAQTDVGYYGHVMFVERVNNDGSILVSEMNYSAAPGILTYRTVPAYQVNNYRYIH.

An N-terminal signal peptide occupies residues 1-25; the sequence is MQKKVIAAIIGTSAISAVAATQANA. Residues 27–70 enclose the LysM 1 domain; sequence TTHTVKPGESVWAISNKYGISIAKLKSLNNLTSNLIFPNQVLKV. Over residues 71 to 86 the composition is skewed to low complexity; the sequence is SGSSNSTSNSSRPSTN. A disordered region spans residues 71–90; it reads SGSSNSTSNSSRPSTNSGGG. 2 consecutive LysM domains span residues 91–134 and 158–201; these read SYYT…KLKV. Residues 211–335 form the Peptidase C51 domain; it reads ASATTTNRGY…YQVNNYRYIH (125 aa).

Its subcellular location is the secreted. It is found in the cell surface. It catalyses the reaction Hydrolyzes the link between N-acetylmuramoyl residues and L-amino acid residues in certain cell-wall glycopeptides.. In terms of biological role, peptidoglycan hydrolase involved in the splitting of the septum during cell division. This is N-acetylmuramoyl-L-alanine amidase sle1 (sle1) from Staphylococcus aureus (strain bovine RF122 / ET3-1).